Consider the following 184-residue polypeptide: UPF0215 protein MJ1150 (184 aa).

Belongs to the UPF0215 family.

This is UPF0215 protein MJ1150 from Methanocaldococcus jannaschii (strain ATCC 43067 / DSM 2661 / JAL-1 / JCM 10045 / NBRC 100440) (Methanococcus jannaschii).